The primary structure comprises 23 residues: Keratin (23 aa).

In terms of domain architecture, IF rod spans 1 to 23; the sequence is YSSQLAQVQGLIGNVESQLAEIR. Residues 1–23 form a coil 2 region; that stretch reads YSSQLAQVQGLIGNVESQLAEIR.

It belongs to the intermediate filament family.

The chain is Keratin from Cervus elaphus (Red deer).